The primary structure comprises 606 residues: RUN and FYVE domain-containing protein 2 (606 aa).

Positions 37-169 constitute an RUN domain; the sequence is DSDYPPLQQF…IDANLCVKGE (133 aa). Positions 210–534 form a coiled coil; it reads EELNRQLNST…IKEANKALQG (325 aa). The segment at 540-598 adopts an FYVE-type zinc-finger fold; the sequence is DKEATHCKLCEKEFSLSKRKHHCRNCGEIFCNACSDNELPLPSSPKPVRVCDSCHALLI. 8 residues coordinate Zn(2+): C546, C549, C562, C565, C570, C573, C590, and C593.

Interacts with BMX. As to expression, expressed in brain, lung and testis.

It localises to the nucleus. The protein is RUN and FYVE domain-containing protein 2 (RUFY2) of Homo sapiens (Human).